We begin with the raw amino-acid sequence, 134 residues long: Arsenate reductase (134 aa).

Catalysis depends on nucleophile residues C11, C83, and C90. 2 disulfide bridges follow: C11-C83 and C83-C90.

This sequence belongs to the low molecular weight phosphotyrosine protein phosphatase family. Thioredoxin-coupled ArsC subfamily.

It localises to the cytoplasm. It carries out the reaction arsenate + [thioredoxin]-dithiol + H(+) = arsenite + [thioredoxin]-disulfide + H2O. In terms of biological role, catalyzes the reduction of arsenate [As(V)] to arsenite [As(III)]. The polypeptide is Arsenate reductase (Bacillus cereus (strain ATCC 14579 / DSM 31 / CCUG 7414 / JCM 2152 / NBRC 15305 / NCIMB 9373 / NCTC 2599 / NRRL B-3711)).